The chain runs to 311 residues: Porphobilinogen deaminase (311 aa).

C241 bears the S-(dipyrrolylmethanemethyl)cysteine mark.

Belongs to the HMBS family. Monomer. Dipyrromethane serves as cofactor.

It carries out the reaction 4 porphobilinogen + H2O = hydroxymethylbilane + 4 NH4(+). It functions in the pathway porphyrin-containing compound metabolism; protoporphyrin-IX biosynthesis; coproporphyrinogen-III from 5-aminolevulinate: step 2/4. Tetrapolymerization of the monopyrrole PBG into the hydroxymethylbilane pre-uroporphyrinogen in several discrete steps. The sequence is that of Porphobilinogen deaminase from Bacillus pumilus (strain SAFR-032).